The following is a 64-amino-acid chain: Copper-metallothionein (64 aa).

The residue at position 1 (Ser-1) is an N-acetylserine. The Cu(+) site is built by Cys-7, Cys-11, Cys-16, Cys-18, Cys-22, Cys-24, Cys-28, Cys-30, Cys-33, Cys-36, Cys-38, Cys-43, Cys-45, Cys-49, Cys-55, Cys-57, Cys-61, and Cys-63.

The protein belongs to the metallothionein superfamily. Type 2 family.

In terms of biological role, the metallothioneins are involved in the cellular sequestration of toxic metal ions and regulation of essential trace elements. This isoform binds exclusively copper. This Helix pomatia (Roman snail) protein is Copper-metallothionein.